The following is a 589-amino-acid chain: Phosphoenolpyruvate carboxykinase [GTP] (589 aa).

Residues Arg75 and 207–209 (YGG) each bind substrate. Residues Lys216 and His236 each coordinate Mn(2+). Substrate is bound at residue Ser258. A GTP-binding site is contributed by 259–264 (ASGKTN). Ser260 is an active-site residue. Asp287 is a binding site for Mn(2+). 374–376 (NSR) contacts substrate. GTP is bound by residues Arg376, Arg407, and 500 to 503 (FAEN).

The protein belongs to the phosphoenolpyruvate carboxykinase [GTP] family. It depends on Mn(2+) as a cofactor.

It localises to the cytoplasm. It catalyses the reaction oxaloacetate + GTP = phosphoenolpyruvate + GDP + CO2. It participates in carbohydrate biosynthesis; gluconeogenesis. Functionally, catalyzes the conversion of oxaloacetate (OAA) to phosphoenolpyruvate (PEP), the rate-limiting step in the metabolic pathway that produces glucose from lactate and other precursors derived from the citric acid cycle. In Thermoplasma volcanium (strain ATCC 51530 / DSM 4299 / JCM 9571 / NBRC 15438 / GSS1), this protein is Phosphoenolpyruvate carboxykinase [GTP].